Here is a 367-residue protein sequence, read N- to C-terminus: MSLADSVLAVNNDLPIRTDKSVHSGKVRSVYWLTDADSRRLIKTKGYNVPEDTPLAIMVISDRISAFDCIFHGEGGLKGIPGKGAALNAISNHWFKLFAENGLADSHILDIPHPFVWIVQKARPIKVEAICRQYITGSMWRAYSKGERVFCGITLPEGLEKDQKLPELLITPSTKGILTGIPGVPAQDDVNISRSDIEANYQAFGFEKVEDIDLYEKLLKDGFKVISKALADLDQVFVDTKFEFGYVTDQDGNSKLIYMDEVGTPDSSRIWDGAAYRDGKILENSKEGFRQFLLNHFPDPDILLNKDRMPEREALARDNALPLEAMMQVSRTYTGIAEKVTGAAIPLPANPKADIIKILREEYDLIV.

Belongs to the SAICAR synthetase family.

It catalyses the reaction 5-amino-1-(5-phospho-D-ribosyl)imidazole-4-carboxylate + L-aspartate + ATP = (2S)-2-[5-amino-1-(5-phospho-beta-D-ribosyl)imidazole-4-carboxamido]succinate + ADP + phosphate + 2 H(+). It functions in the pathway purine metabolism; IMP biosynthesis via de novo pathway; 5-amino-1-(5-phospho-D-ribosyl)imidazole-4-carboxamide from 5-amino-1-(5-phospho-D-ribosyl)imidazole-4-carboxylate: step 1/2. This Shewanella oneidensis (strain ATCC 700550 / JCM 31522 / CIP 106686 / LMG 19005 / NCIMB 14063 / MR-1) protein is Phosphoribosylaminoimidazole-succinocarboxamide synthase.